The following is a 425-amino-acid chain: F-box/LRR-repeat protein At3g59250 (425 aa).

The 49-residue stretch at 6 to 54 folds into the F-box domain; the sequence is KDKISNLPEALICHILSFLPIEDSALTSVLSKRWRYLFAFRPNLVFDDS. LRR repeat units lie at residues 86–113, 138–163, 185–210, 264–293, and 294–319; these read DLQVNVNGVRLPSKVFVSKSLVRLRIES, MLGKGEDCFEKLTSGCHVLEELVLNN, CTESYDKNPHSVLFDTPNLVYLKYSD, CLSANSLAVLTFCCESIPVFNNLIQLTIKT, and NQSVGWESLPALLKNCPILETLVFEG.

The chain is F-box/LRR-repeat protein At3g59250 from Arabidopsis thaliana (Mouse-ear cress).